The primary structure comprises 309 residues: MAEITAALVKSLREQTGAGMMDCKKALTETAGDVEAAIDWLRKKGLAAAAKKAGRTASEGLVGIATAGTAGAVVEVNAETDFVARNDTFQGFVETVASLTLAAKGDIEALKSAAYPGGEGRTVEAQVTHLIATIGENMQLRRSAALEVEQGVVTSYMHTAVKPGLGKIGVLVALKSAADPAKLDELGRQIAMHVAAAQPRYAFISEVDAEALDRERSVLSEQAKASGKPDAIIEKMVEGRLRKFYEEVVLTEQIFVIDGETKIAKVLEKAGKDLGAPIELGGFVRFQLGEGIEKEESDFAAEVAAQLKK.

Residues 80 to 83 form an involved in Mg(2+) ion dislocation from EF-Tu region; the sequence is TDFV.

Belongs to the EF-Ts family.

The protein resides in the cytoplasm. In terms of biological role, associates with the EF-Tu.GDP complex and induces the exchange of GDP to GTP. It remains bound to the aminoacyl-tRNA.EF-Tu.GTP complex up to the GTP hydrolysis stage on the ribosome. This Rhodospirillum rubrum (strain ATCC 11170 / ATH 1.1.1 / DSM 467 / LMG 4362 / NCIMB 8255 / S1) protein is Elongation factor Ts.